The chain runs to 285 residues: Foldase protein PrsA 2 (285 aa).

The N-terminal stretch at 1-20 is a signal peptide; the sequence is MRGKHIFIITALISILMLSA. C21 carries N-palmitoyl cysteine lipidation. The S-diacylglycerol cysteine moiety is linked to residue C21. Residues 134 to 224 form the PpiC domain; the sequence is KPEIKASHIL…NGYHVIKLTD (91 aa).

Belongs to the PrsA family.

The protein localises to the cell membrane. The catalysed reaction is [protein]-peptidylproline (omega=180) = [protein]-peptidylproline (omega=0). In terms of biological role, plays a major role in protein secretion by helping the post-translocational extracellular folding of several secreted proteins. In Bacillus cereus (strain ATCC 14579 / DSM 31 / CCUG 7414 / JCM 2152 / NBRC 15305 / NCIMB 9373 / NCTC 2599 / NRRL B-3711), this protein is Foldase protein PrsA 2 (prsA2).